Reading from the N-terminus, the 457-residue chain is Cysteine--tRNA ligase (457 aa).

Cys-28 contacts Zn(2+). The short motif at 30-40 (PTVYDTAHIGN) is the 'HIGH' region element. Zn(2+) contacts are provided by Cys-212, His-237, and Glu-241. Positions 270-274 (KMSKS) match the 'KMSKS' region motif. An ATP-binding site is contributed by Lys-273.

The protein belongs to the class-I aminoacyl-tRNA synthetase family. In terms of assembly, monomer. It depends on Zn(2+) as a cofactor.

Its subcellular location is the cytoplasm. The catalysed reaction is tRNA(Cys) + L-cysteine + ATP = L-cysteinyl-tRNA(Cys) + AMP + diphosphate. The sequence is that of Cysteine--tRNA ligase from Wolbachia pipientis wMel.